A 347-amino-acid chain; its full sequence is Holliday junction branch migration complex subunit RuvB (347 aa).

The tract at residues 1–180 (MTSRVVSPEQ…FGIPCRMNFY (180 aa)) is large ATPase domain (RuvB-L). ATP-binding positions include leucine 19, arginine 20, glycine 61, lysine 64, threonine 65, threonine 66, 127 to 129 (EDF), arginine 170, tyrosine 180, and arginine 217. A Mg(2+)-binding site is contributed by threonine 65. Residues 181–251 (EPAELEAIVS…VADAALNRLE (71 aa)) form a small ATPAse domain (RuvB-S) region. The segment at 254–347 (RIGLDAMDRR…LLTRMDEEGE (94 aa)) is head domain (RuvB-H). Residues arginine 290, arginine 309, and arginine 314 each contribute to the DNA site.

The protein belongs to the RuvB family. As to quaternary structure, homohexamer. Forms an RuvA(8)-RuvB(12)-Holliday junction (HJ) complex. HJ DNA is sandwiched between 2 RuvA tetramers; dsDNA enters through RuvA and exits via RuvB. An RuvB hexamer assembles on each DNA strand where it exits the tetramer. Each RuvB hexamer is contacted by two RuvA subunits (via domain III) on 2 adjacent RuvB subunits; this complex drives branch migration. In the full resolvosome a probable DNA-RuvA(4)-RuvB(12)-RuvC(2) complex forms which resolves the HJ.

The protein resides in the cytoplasm. The catalysed reaction is ATP + H2O = ADP + phosphate + H(+). Functionally, the RuvA-RuvB-RuvC complex processes Holliday junction (HJ) DNA during genetic recombination and DNA repair, while the RuvA-RuvB complex plays an important role in the rescue of blocked DNA replication forks via replication fork reversal (RFR). RuvA specifically binds to HJ cruciform DNA, conferring on it an open structure. The RuvB hexamer acts as an ATP-dependent pump, pulling dsDNA into and through the RuvAB complex. RuvB forms 2 homohexamers on either side of HJ DNA bound by 1 or 2 RuvA tetramers; 4 subunits per hexamer contact DNA at a time. Coordinated motions by a converter formed by DNA-disengaged RuvB subunits stimulates ATP hydrolysis and nucleotide exchange. Immobilization of the converter enables RuvB to convert the ATP-contained energy into a lever motion, pulling 2 nucleotides of DNA out of the RuvA tetramer per ATP hydrolyzed, thus driving DNA branch migration. The RuvB motors rotate together with the DNA substrate, which together with the progressing nucleotide cycle form the mechanistic basis for DNA recombination by continuous HJ branch migration. Branch migration allows RuvC to scan DNA until it finds its consensus sequence, where it cleaves and resolves cruciform DNA. This chain is Holliday junction branch migration complex subunit RuvB, found in Paramagnetospirillum magneticum (strain ATCC 700264 / AMB-1) (Magnetospirillum magneticum).